The sequence spans 326 residues: Vitamin B12 import system permease protein BtuC (326 aa).

9 helical membrane-spanning segments follow: residues 15 to 35 (WLLCLSVLMLLALLLSLCAGE), 61 to 81 (LAVLLVGAALAISGAVMQALF), 88 to 108 (PGLLGVSNGAGVGLIAAVLLG), 112 to 132 (LPNWALGLCAIAGALIITLIL), 146 to 166 (LLAGVALGIICSALMTWAIYF), 184 to 204 (GGVDWRQSWLMLALIPVLLWI), 240 to 260 (GWMVGVSVALAGAIGFIGLVI), 274 to 294 (VLLPGCALAGASALLLADVVA), and 302 to 322 (ELPIGVVTATLGAPVFIWLLL).

Belongs to the binding-protein-dependent transport system permease family. FecCD subfamily. As to quaternary structure, the complex is composed of two ATP-binding proteins (BtuD), two transmembrane proteins (BtuC) and a solute-binding protein (BtuF).

The protein resides in the cell inner membrane. Functionally, part of the ABC transporter complex BtuCDF involved in vitamin B12 import. Involved in the translocation of the substrate across the membrane. The protein is Vitamin B12 import system permease protein BtuC of Escherichia coli O8 (strain IAI1).